We begin with the raw amino-acid sequence, 581 residues long: Protein LYRIC (581 aa).

Topologically, residues 1 to 49 (MAARSWQDELAQQAEEGSARLRELLSVGLGFLRTELGLDLGLEPKRYPS) are lumenal. An activation of NF-kappa-B region spans residues 1-71 (MAARSWQDEL…LLLFLLGYGW (71 aa)). The chain crosses the membrane as a helical span at residues 50–70 (WVILVGTGALGLLLLFLLGYG). Topologically, residues 71–581 (WAAACAGARK…KKKKKARRET (511 aa)) are cytoplasmic. Positions 72 to 168 (AAACAGARKK…EKSKKNKKKS (97 aa)) are interaction with BCCIP. A disordered region spans residues 77-221 (GARKKRRSPP…DSGSLDSTIP (145 aa)). The interaction with RELA stretch occupies residues 100-204 (EDPAQLKNLR…ISHREKRQQR (105 aa)). Residues 108 to 126 (LRSEEQKKKNRKKLPEKPK) show a composition bias toward basic and acidic residues. Thr-142 is modified (phosphothreonine). The segment covering 159 to 168 (EKSKKNKKKS) has biased composition (basic residues). The residue at position 179 (Ser-179) is a Phosphoserine. Residues 197–207 (HREKRQQRKRD) are compositionally biased toward basic residues. Phosphoserine occurs at positions 215 and 250. Residue Lys-263 is modified to N6-acetyllysine. Residues 280 to 581 (VNGGGWSEKS…KKKKKARRET (302 aa)) are disordered. Residues Ser-297, Ser-305, and Ser-310 each carry the phosphoserine modification. Positions 318–331 (QSAWTQDPGDTNAN) are enriched in polar residues. Phosphoserine is present on residues Ser-343 and Ser-368. Composition is skewed to polar residues over residues 353 to 371 (EPVS…SRNQ) and 382 to 393 (NGLSSADPSSDW). The tract at residues 380–442 (GLNGLSSADP…EGALPTGKSK (63 aa)) is lung-homing for mammary tumors. Phosphoserine is present on residues Ser-414 and Ser-425. Basic and acidic residues predominate over residues 421 to 433 (DQKDSDDDKEKGE). Basic residues predominate over residues 440–450 (KSKKKKKKKKK). Residues Ser-456, Ser-477, Ser-493, and Ser-495 each carry the phosphoserine modification. Polar residues-rich tracts occupy residues 519-535 (PSVT…SSQV) and 548-567 (NAKQ…NWES). The residue at position 567 (Ser-567) is a Phosphoserine. Residues 570-581 (QIKKKKKARRET) are compositionally biased toward basic residues.

As to quaternary structure, interacts with BCCIP, CREBBP/CBP and RELA/p65. As to expression, widely expressed, with highest levels in liver, kidney, prostate and small intestine. Not detected in endothelial cells.

It localises to the endoplasmic reticulum membrane. It is found in the nucleus membrane. The protein resides in the cell junction. The protein localises to the tight junction. Its subcellular location is the nucleus. It localises to the nucleolus. It is found in the cytoplasm. The protein resides in the perinuclear region. In terms of biological role, down-regulates SLC1A2/EAAT2 promoter activity when expressed ectopically. Activates the nuclear factor kappa-B (NF-kappa-B) transcription factor. Promotes anchorage-independent growth of immortalized melanocytes and astrocytes which is a key component in tumor cell expansion. Promotes lung metastasis and also has an effect on bone and brain metastasis, possibly by enhancing the seeding of tumor cells to the target organ endothelium. Induces chemoresistance. The chain is Protein LYRIC (Mtdh) from Rattus norvegicus (Rat).